The sequence spans 231 residues: LexA repressor (231 aa).

Positions 31-51 (RAEIATEFGFRSANAAEEHLQ) form a DNA-binding region, H-T-H motif. Active-site for autocatalytic cleavage activity residues include S148 and K185.

This sequence belongs to the peptidase S24 family. In terms of assembly, homodimer.

It catalyses the reaction Hydrolysis of Ala-|-Gly bond in repressor LexA.. Functionally, represses a number of genes involved in the response to DNA damage (SOS response), including recA and lexA. In the presence of single-stranded DNA, RecA interacts with LexA causing an autocatalytic cleavage which disrupts the DNA-binding part of LexA, leading to derepression of the SOS regulon and eventually DNA repair. The chain is LexA repressor from Leptothrix cholodnii (strain ATCC 51168 / LMG 8142 / SP-6) (Leptothrix discophora (strain SP-6)).